Here is a 363-residue protein sequence, read N- to C-terminus: Holliday junction branch migration complex subunit RuvB (363 aa).

Positions Met-1 to Leu-23 are disordered. A large ATPase domain (RuvB-L) region spans residues Met-1–Tyr-184. ATP-binding positions include Leu-23, Arg-24, Gly-65, Lys-68, Thr-69, Thr-70, Glu-131–Tyr-133, Arg-174, Tyr-184, and Arg-221. Thr-69 contributes to the Mg(2+) binding site. The small ATPAse domain (RuvB-S) stretch occupies residues Thr-185 to Glu-255. The interval His-258–Asp-363 is head domain (RuvB-H). DNA contacts are provided by Arg-294, Arg-313, and Arg-318.

It belongs to the RuvB family. In terms of assembly, homohexamer. Forms an RuvA(8)-RuvB(12)-Holliday junction (HJ) complex. HJ DNA is sandwiched between 2 RuvA tetramers; dsDNA enters through RuvA and exits via RuvB. An RuvB hexamer assembles on each DNA strand where it exits the tetramer. Each RuvB hexamer is contacted by two RuvA subunits (via domain III) on 2 adjacent RuvB subunits; this complex drives branch migration. In the full resolvosome a probable DNA-RuvA(4)-RuvB(12)-RuvC(2) complex forms which resolves the HJ.

The protein resides in the cytoplasm. It catalyses the reaction ATP + H2O = ADP + phosphate + H(+). The RuvA-RuvB-RuvC complex processes Holliday junction (HJ) DNA during genetic recombination and DNA repair, while the RuvA-RuvB complex plays an important role in the rescue of blocked DNA replication forks via replication fork reversal (RFR). RuvA specifically binds to HJ cruciform DNA, conferring on it an open structure. The RuvB hexamer acts as an ATP-dependent pump, pulling dsDNA into and through the RuvAB complex. RuvB forms 2 homohexamers on either side of HJ DNA bound by 1 or 2 RuvA tetramers; 4 subunits per hexamer contact DNA at a time. Coordinated motions by a converter formed by DNA-disengaged RuvB subunits stimulates ATP hydrolysis and nucleotide exchange. Immobilization of the converter enables RuvB to convert the ATP-contained energy into a lever motion, pulling 2 nucleotides of DNA out of the RuvA tetramer per ATP hydrolyzed, thus driving DNA branch migration. The RuvB motors rotate together with the DNA substrate, which together with the progressing nucleotide cycle form the mechanistic basis for DNA recombination by continuous HJ branch migration. Branch migration allows RuvC to scan DNA until it finds its consensus sequence, where it cleaves and resolves cruciform DNA. The protein is Holliday junction branch migration complex subunit RuvB of Bartonella tribocorum (strain CIP 105476 / IBS 506).